The chain runs to 600 residues: MAKEIILGIDLGTTNSVVAIIENQKPVVLENPNGKTTTPSVVAFKNNEEIVGDAAKRQLETNPEAIASIKRLMGTDKTVRANERDYKPEEISAKILAYLKEYAEKKIGHKVTKAVITVPAYFDNAQREATKNAGKIAGLQVERIINEPTAAALAFGLDKTEKEMKVLVYDLGGGTFDVSVLELSGGTFEVLSTSGDNHLGGDDWDNEIVNWLVKKIKEEYDFDPKSDKMALTRLKEEAEKTKINLSNQSVSTVSLPFLGMGKNGPINVELELKRSEFEKMTAHLIDRTRKPIVDALKQAKIEASDLDEVLLVGGSTRMPAVQSMIEHTLNKKPNRSINPDEVVAIGAAIQGGVLAGEISDVLLLDVTPLTLGIETLGGIATPLIPRNTTIPVTKSQIFSTAEDNQTEVTISVVQGERQLAADNKMLGRFNLSGIEAAPRGLPQIEVSFSIDVNGITTVSAKDKKTGKEQTITIKNTSTLSEEEINKMIQEAEENREADALKKDKIETTVRAEGLINQLEKSITDQGEKIDPKQKELLEKQIQELKDLLKEEKTDELKLKLDQIEAAAQSFAQATAQQANTSESDPKADDSNTIDAEIKQD.

Thr-175 carries the phosphothreonine; by autocatalysis modification. The span at 569–578 (SFAQATAQQA) shows a compositional bias: low complexity. Positions 569–600 (SFAQATAQQANTSESDPKADDSNTIDAEIKQD) are disordered. Basic and acidic residues predominate over residues 583–600 (SDPKADDSNTIDAEIKQD).

Belongs to the heat shock protein 70 family.

Functionally, acts as a chaperone. The chain is Chaperone protein DnaK from Mesomycoplasma hyopneumoniae (strain J / ATCC 25934 / NCTC 10110) (Mycoplasma hyopneumoniae).